Reading from the N-terminus, the 66-residue chain is UPF0370 protein YpfN (66 aa).

The helical transmembrane segment at 4–24 (LAKYWWILVIVFLVGVLLNVI) threads the bilayer. The segment at 39-66 (KPELPPHRDFNDKWDDDDDWPKKDQPKK) is disordered. A compositionally biased stretch (basic and acidic residues) spans 42–51 (LPPHRDFNDK).

The protein belongs to the UPF0370 family.

The protein resides in the cell membrane. This chain is UPF0370 protein YpfN, found in Escherichia coli O139:H28 (strain E24377A / ETEC).